The following is a 561-amino-acid chain: Oxygen-dependent choline dehydrogenase (561 aa).

6–35 (DYIIIGAGSAGNVLATRLTEDADVSVLLLE) is a binding site for FAD. His-475 functions as the Proton acceptor in the catalytic mechanism.

The protein belongs to the GMC oxidoreductase family. The cofactor is FAD.

It carries out the reaction choline + A = betaine aldehyde + AH2. It catalyses the reaction betaine aldehyde + NAD(+) + H2O = glycine betaine + NADH + 2 H(+). It functions in the pathway amine and polyamine biosynthesis; betaine biosynthesis via choline pathway; betaine aldehyde from choline (cytochrome c reductase route): step 1/1. Involved in the biosynthesis of the osmoprotectant glycine betaine. Catalyzes the oxidation of choline to betaine aldehyde and betaine aldehyde to glycine betaine at the same rate. This Pseudomonas aeruginosa (strain LESB58) protein is Oxygen-dependent choline dehydrogenase.